The chain runs to 107 residues: UPF0145 protein CKO_02237 (107 aa).

This sequence belongs to the UPF0145 family.

This Citrobacter koseri (strain ATCC BAA-895 / CDC 4225-83 / SGSC4696) protein is UPF0145 protein CKO_02237.